Consider the following 332-residue polypeptide: Biotin synthase (332 aa).

The Radical SAM core domain occupies 53-282 (HFGKKVKLNM…TKEIRISGGR (230 aa)). [4Fe-4S] cluster is bound by residues Cys-71, Cys-75, and Cys-78. [2Fe-2S] cluster-binding residues include Cys-115, Cys-147, Cys-207, and Arg-277.

This sequence belongs to the radical SAM superfamily. Biotin synthase family. In terms of assembly, homodimer. The cofactor is [4Fe-4S] cluster. Requires [2Fe-2S] cluster as cofactor.

It carries out the reaction (4R,5S)-dethiobiotin + (sulfur carrier)-SH + 2 reduced [2Fe-2S]-[ferredoxin] + 2 S-adenosyl-L-methionine = (sulfur carrier)-H + biotin + 2 5'-deoxyadenosine + 2 L-methionine + 2 oxidized [2Fe-2S]-[ferredoxin]. The protein operates within cofactor biosynthesis; biotin biosynthesis; biotin from 7,8-diaminononanoate: step 2/2. Functionally, catalyzes the conversion of dethiobiotin (DTB) to biotin by the insertion of a sulfur atom into dethiobiotin via a radical-based mechanism. In Bacillus cereus (strain AH187), this protein is Biotin synthase.